The sequence spans 338 residues: MTTRTISPEKTDDDYVESSLRPRALEDYIGQEKAKGNLRVFIDAARKRGEALDHVLLYGPPGLGKTTLANIIACEMGVNIKSTSGPVIERPGDLAAILTNLEPHDVLFIDEIHRLSHVVEEILYPAMEDFQLDIIIGQGPSARTIKLDLPRFTLVGATTRAGLLSSPLRDRFGVISRLEFYTDAELSTIVTRSAHILDIQIEPDGARELARRSRGTPRIANRLLRRVRDFAQVRADGVISAQVVDESLKLLEIDEKGFDQMDRTIMLTIIDKFGGGPVGLDTIAAAIGEERDTIEDVYEPFLIQHGFINRTPRGRVATKSAYEHFGRIAPAPGQGALF.

The tract at residues 1–181 (MTTRTISPEK…FGVISRLEFY (181 aa)) is large ATPase domain (RuvB-L). Residues Leu20, Arg21, Gly62, Lys65, Thr66, Thr67, 128-130 (EDF), Arg171, Tyr181, and Arg218 each bind ATP. Thr66 is a Mg(2+) binding site. The small ATPAse domain (RuvB-S) stretch occupies residues 182–252 (TDAELSTIVT…VVDESLKLLE (71 aa)). The interval 255 to 338 (EKGFDQMDRT…APAPGQGALF (84 aa)) is head domain (RuvB-H). 3 residues coordinate DNA: Arg291, Arg310, and Arg315.

The protein belongs to the RuvB family. In terms of assembly, homohexamer. Forms an RuvA(8)-RuvB(12)-Holliday junction (HJ) complex. HJ DNA is sandwiched between 2 RuvA tetramers; dsDNA enters through RuvA and exits via RuvB. An RuvB hexamer assembles on each DNA strand where it exits the tetramer. Each RuvB hexamer is contacted by two RuvA subunits (via domain III) on 2 adjacent RuvB subunits; this complex drives branch migration. In the full resolvosome a probable DNA-RuvA(4)-RuvB(12)-RuvC(2) complex forms which resolves the HJ.

It is found in the cytoplasm. The catalysed reaction is ATP + H2O = ADP + phosphate + H(+). Its function is as follows. The RuvA-RuvB-RuvC complex processes Holliday junction (HJ) DNA during genetic recombination and DNA repair, while the RuvA-RuvB complex plays an important role in the rescue of blocked DNA replication forks via replication fork reversal (RFR). RuvA specifically binds to HJ cruciform DNA, conferring on it an open structure. The RuvB hexamer acts as an ATP-dependent pump, pulling dsDNA into and through the RuvAB complex. RuvB forms 2 homohexamers on either side of HJ DNA bound by 1 or 2 RuvA tetramers; 4 subunits per hexamer contact DNA at a time. Coordinated motions by a converter formed by DNA-disengaged RuvB subunits stimulates ATP hydrolysis and nucleotide exchange. Immobilization of the converter enables RuvB to convert the ATP-contained energy into a lever motion, pulling 2 nucleotides of DNA out of the RuvA tetramer per ATP hydrolyzed, thus driving DNA branch migration. The RuvB motors rotate together with the DNA substrate, which together with the progressing nucleotide cycle form the mechanistic basis for DNA recombination by continuous HJ branch migration. Branch migration allows RuvC to scan DNA until it finds its consensus sequence, where it cleaves and resolves cruciform DNA. The protein is Holliday junction branch migration complex subunit RuvB of Geobacter sulfurreducens (strain ATCC 51573 / DSM 12127 / PCA).